A 162-amino-acid chain; its full sequence is NADH-quinone oxidoreductase subunit I (162 aa).

4Fe-4S ferredoxin-type domains are found at residues 52–82 (LRRY…IEAG) and 93–122 (TRYD…EGPN). Residues Cys62, Cys65, Cys68, Cys72, Cys102, Cys105, Cys108, and Cys112 each contribute to the [4Fe-4S] cluster site.

This sequence belongs to the complex I 23 kDa subunit family. NDH-1 is composed of 14 different subunits. Subunits NuoA, H, J, K, L, M, N constitute the membrane sector of the complex. It depends on [4Fe-4S] cluster as a cofactor.

It is found in the cell inner membrane. It catalyses the reaction a quinone + NADH + 5 H(+)(in) = a quinol + NAD(+) + 4 H(+)(out). Its function is as follows. NDH-1 shuttles electrons from NADH, via FMN and iron-sulfur (Fe-S) centers, to quinones in the respiratory chain. The immediate electron acceptor for the enzyme in this species is believed to be ubiquinone. Couples the redox reaction to proton translocation (for every two electrons transferred, four hydrogen ions are translocated across the cytoplasmic membrane), and thus conserves the redox energy in a proton gradient. This is NADH-quinone oxidoreductase subunit I from Methylobacterium sp. (strain 4-46).